Here is a 455-residue protein sequence, read N- to C-terminus: Ribosomal protein uS12 methylthiotransferase RimO (455 aa).

Positions 21-131 (GKVGFISLGC…VVGAVHQYVP (111 aa)) constitute an MTTase N-terminal domain. Residues Cys30, Cys66, Cys95, Cys164, Cys168, and Cys171 each coordinate [4Fe-4S] cluster. Residues 150–387 (LTPRHYAYLK…MAKQAEISAA (238 aa)) form the Radical SAM core domain. The TRAM domain maps to 390–455 (QAKIGRTIDV…DEHDLWARLI (66 aa)).

It belongs to the methylthiotransferase family. RimO subfamily. The cofactor is [4Fe-4S] cluster.

The protein resides in the cytoplasm. It carries out the reaction L-aspartate(89)-[ribosomal protein uS12]-hydrogen + (sulfur carrier)-SH + AH2 + 2 S-adenosyl-L-methionine = 3-methylsulfanyl-L-aspartate(89)-[ribosomal protein uS12]-hydrogen + (sulfur carrier)-H + 5'-deoxyadenosine + L-methionine + A + S-adenosyl-L-homocysteine + 2 H(+). In terms of biological role, catalyzes the methylthiolation of an aspartic acid residue of ribosomal protein uS12. This Marinobacter nauticus (strain ATCC 700491 / DSM 11845 / VT8) (Marinobacter aquaeolei) protein is Ribosomal protein uS12 methylthiotransferase RimO.